An 833-amino-acid polypeptide reads, in one-letter code: P protein (833 aa).

At 1–172 (MRLENKDIRL…QVSKLGCCVR (172 aa)) the chain is on the cytoplasmic side. A helical membrane pass occupies residues 173-193 (WIKITGLFVFVVLCSILFSLY). Topologically, residues 194–325 (PDQGKFWQLL…QFLGASVEAQ (132 aa)) are extracellular. Asn210, Asn214, and Asn269 each carry an N-linked (GlcNAc...) asparagine glycan. Residues 326 to 346 (VASAVAILAGVYTLIIFEIVH) form a helical membrane-spanning segment. At 347 to 348 (RT) the chain is on the cytoplasmic side. A helical transmembrane segment spans residues 349 to 369 (LAAMLGALAALAALAVVGDRP). Residues 370–381 (SLTHVVEWIDFE) lie on the Extracellular side of the membrane. The helical transmembrane segment at 382-402 (TLALLFGMMILVAVFSETGFF) threads the bilayer. The Cytoplasmic segment spans residues 403–417 (DYCAVKAYQLSRGRV). Residues 418–438 (WAMIFMLCLMAAILSAFLDNV) traverse the membrane as a helical segment. Topologically, residues 439–501 (TTMLLFTPVT…ELRKMGLDFA (63 aa)) are extracellular. A helical membrane pass occupies residues 502–522 (GFTAHMFLGICLVLLVSFPLL). The Cytoplasmic portion of the chain corresponds to 523 to 617 (RLLYWNKKLY…RKHRISDRSL (95 aa)). The helical transmembrane segment at 618-638 (LVKCLTVLGFVISMFFLNSFV) threads the bilayer. Residue Pro639 is a topological domain, extracellular. A helical transmembrane segment spans residues 640 to 660 (GIHLDLGWIAILGAIWLLILA). At 661-675 (DIHDFEIILHRVEWA) the chain is on the cytoplasmic side. A helical membrane pass occupies residues 676–696 (TLLFFAALFVLMEALTHLHLV). The Extracellular segment spans residues 697-718 (EYVGEQTALLIKMVPEDQRFAA). The helical transmembrane segment at 719-739 (AIVLIVWVSALASSLIDNIPF) threads the bilayer. The Cytoplasmic portion of the chain corresponds to 740–759 (TATMIPVLLNLSQDPEISLP). A helical transmembrane segment spans residues 760–780 (ALPLMYALALGACLGGNGTLI). The Extracellular portion of the chain corresponds to 781-810 (GASTNVVCAGIAEKHGYGFSFMEFFRLGFP). Residues 811-831 (VMLMSCTIGMCYLLIAHIVVG) traverse the membrane as a helical segment. The Cytoplasmic portion of the chain corresponds to 832 to 833 (WN).

Belongs to the CitM (TC 2.A.11) transporter family. Most abundant in melanocytes. Also present in neonatal and adult eye tissue presumably as a result of expression in the retinal pigmented epithelium and choroid body, known sites of melanogenesis in the eye. Small but detectable amounts also observed in fetal, neonatal and adult brain. Moderate amounts detected in adult testis and ovary. Not detected in heart, kidney, spleen, liver or thymus.

The protein resides in the melanosome membrane. The catalysed reaction is chloride(in) = chloride(out). Its function is as follows. Contributes to a melanosome-specific anion (chloride) current that modulates melanosomal pH for optimal tyrosinase activity required for melanogenesis and the melanosome maturation. One of the components of the mammalian pigmentary system. May serve as a key control point at which color variation is determined. Major determinant of eye color. Seems to regulate the post-translational processing of tyrosinase, which catalyzes the limiting reaction in melanin synthesis. The chain is P protein (Oca2) from Mus musculus (Mouse).